Reading from the N-terminus, the 1673-residue chain is Protein TIC 214 (1673 aa).

Transmembrane regions (helical) follow at residues 18–38, 67–87, 90–110, 127–147, 175–195, and 218–238; these read IINSVVVVGLYYGFLTTFSIG, FITGQLIMFISIYYAPLHLAL, PHTITVLALPYLLFHFFCNTH, LSIQCVFLNNLIFQLFNHFIL, VGWIIGHIILMKSIGLLVVWI, and SMSIAGILNILLFVTCVYYLG.

This sequence belongs to the TIC214 family. In terms of assembly, part of the Tic complex.

It localises to the plastid. It is found in the chloroplast inner membrane. In terms of biological role, involved in protein precursor import into chloroplasts. May be part of an intermediate translocation complex acting as a protein-conducting channel at the inner envelope. The protein is Protein TIC 214 of Lactuca sativa (Garden lettuce).